A 947-amino-acid polypeptide reads, in one-letter code: Translation initiation factor IF-2 (947 aa).

The disordered stretch occupies residues 55-361 (TKDAQAGSAK…PVTERKFHEL (307 aa)). A compositionally biased stretch (basic and acidic residues) spans 63–73 (AKDKQVAEQKA). The span at 76–90 (AKATTPQPAAATQEA) shows a compositional bias: low complexity. 3 stretches are compositionally biased toward basic and acidic residues: residues 103–116 (FKAE…EQAA), 125–134 (SNDRKSDYRQ), and 170–183 (NDGH…DKNR). Low complexity predominate over residues 190–204 (RQQDTGRQGQTQAGA). Composition is skewed to basic and acidic residues over residues 225 to 249 (ARQR…RQEA), 257 to 267 (QTEDKKHREAS), and 294 to 311 (NRPD…DGQK). Residues 316-334 (SWNSQNQVRNQKNSNWNNN) show a composition bias toward low complexity. A compositionally biased stretch (basic residues) spans 335-345 (KKNKKGKHHKN). Residues 448–617 (ERAPVVTIMG…LLVAEVEELK (170 aa)) form the tr-type G domain. The interval 457–464 (GHVDHGKT) is G1. 457–464 (GHVDHGKT) contributes to the GTP binding site. Residues 482-486 (GITQH) are G2. Positions 503-506 (DTPG) are G3. Residues 503 to 507 (DTPGH) and 557 to 560 (NKID) contribute to the GTP site. The segment at 557-560 (NKID) is G4. Residues 593-595 (SAK) are G5.

Belongs to the TRAFAC class translation factor GTPase superfamily. Classic translation factor GTPase family. IF-2 subfamily.

Its subcellular location is the cytoplasm. Functionally, one of the essential components for the initiation of protein synthesis. Protects formylmethionyl-tRNA from spontaneous hydrolysis and promotes its binding to the 30S ribosomal subunits. Also involved in the hydrolysis of GTP during the formation of the 70S ribosomal complex. The chain is Translation initiation factor IF-2 from Streptococcus equi subsp. zooepidemicus (strain MGCS10565).